Here is a 728-residue protein sequence, read N- to C-terminus: Homoaconitase, mitochondrial (728 aa).

A mitochondrion-targeting transit peptide spans 1-24 (MVAIPRLARLSVPAWALSARGRFY). Residues Cys-362, Cys-422, and Cys-425 each contribute to the [4Fe-4S] cluster site.

Belongs to the aconitase/IPM isomerase family. The cofactor is [4Fe-4S] cluster.

It localises to the mitochondrion. It carries out the reaction (2R,3S)-homoisocitrate = cis-homoaconitate + H2O. It participates in amino-acid biosynthesis; L-lysine biosynthesis via AAA pathway; L-alpha-aminoadipate from 2-oxoglutarate: step 3/5. In terms of biological role, catalyzes the reversible hydration of cis-homoaconitate to (2R,3S)-homoisocitrate, a step in the alpha-aminoadipate pathway for lysine biosynthesis. The polypeptide is Homoaconitase, mitochondrial (LYS4) (Cryptococcus neoformans var. neoformans serotype D (strain B-3501A) (Filobasidiella neoformans)).